A 324-amino-acid chain; its full sequence is NADH-dependent D-xylose reductase (324 aa).

Tyr54 serves as the catalytic Proton donor. A substrate-binding site is contributed by His116. Position 220–286 (220–286 (SSFGPQSFLE…SNSPDRMAQN (67 aa))) interacts with NAD(+).

Belongs to the aldo/keto reductase family.

It carries out the reaction xylitol + NAD(+) = D-xylose + NADH + H(+). The enzyme catalyses xylitol + NADP(+) = D-xylose + NADPH + H(+). It participates in carbohydrate metabolism; D-xylose degradation. Reduces D-xylose into xylitol. Preferentially utilizes NADH as a cosubstrate. This is NADH-dependent D-xylose reductase (XYL1) from Candida parapsilosis (Yeast).